Consider the following 470-residue polypeptide: Retinoic acid receptor RXR-gamma (470 aa).

The interval 1–145 (MHLATETAPS…NSPGALTKHI (145 aa)) is modulating. 2 consecutive NR C4-type zinc fingers follow at residues 146–166 (CAICGDRSSGKHYGVYSCEGC) and 182–206 (CRDSKDCLIDKRQRNRCQYCRYQKC). Positions 146–211 (CAICGDRSSG…RYQKCLAMGM (66 aa)) form a DNA-binding region, nuclear receptor. Residues 212–235 (KREAVQEERQRSREKSDTEAESTS) are hinge. The segment covering 217–229 (QEERQRSREKSDT) has biased composition (basic and acidic residues). Residues 217–242 (QEERQRSREKSDTEAESTSSTSEEMP) form a disordered region. In terms of domain architecture, NR LBD spans 238–466 (SEEMPVERIL…TFLMEMLETP (229 aa)).

Belongs to the nuclear hormone receptor family. NR2 subfamily. In terms of assembly, homodimer. Heterodimer; with a rar molecule. Binds DNA preferentially as a rar/rxr heterodimer.

Its subcellular location is the nucleus. In terms of biological role, receptor for retinoic acid. Retinoic acid receptors bind as heterodimers to their target response elements in response to their ligands, all-trans or 9-cis retinoic acid, and regulate gene expression in various biological processes. The rar/rxr heterodimers bind to the retinoic acid response elements (RARE) composed of tandem 5'-AGGTCA-3' sites known as DR1-DR5. The high affinity ligand for rxrs is 9-cis retinoic acid. The polypeptide is Retinoic acid receptor RXR-gamma (rxrg) (Xenopus laevis (African clawed frog)).